Reading from the N-terminus, the 157-residue chain is ABA-responsive protein ABR17 (157 aa).

The protein belongs to the BetVI family.

This Pisum sativum (Garden pea) protein is ABA-responsive protein ABR17.